The following is a 376-amino-acid chain: Protein XRP2 (376 aa).

Residues 1–55 are disordered; it reads MGCFFSKKSRRKSPKKDAALPTGDESATGNDLAETNNTALGSNSNQEAPKQYSWD. The N-myristoyl glycine moiety is linked to residue Gly-2. Cys-3 carries the S-palmitoyl cysteine lipid modification. The segment covering 25–48 has biased composition (polar residues); that stretch reads ESATGNDLAETNNTALGSNSNQEA. The region spanning 49–204 is the C-CAP/cofactor C-like domain; it reads PKQYSWDKRE…NWSNIHDFTP (156 aa). Residues 123–124 and 140–143 contribute to the GTP site; these read GS and QQFR.

This sequence belongs to the TBCC family. In terms of processing, myristoylated on Gly-2; which may be required for membrane targeting. Palmitoylated on Cys-3; which may be required for plasma membrane targeting. In the retina, detected in both rod and cone photoreceptors (at protein level). Has strongest expression in the retinal outer nuclear layer (ONL) and weaker expression in the outer plexiform layer (OPL) and inner plexiform layer (IPL) (at protein level). Expressed in all tissues tested.

The protein resides in the cell membrane. Its subcellular location is the cell projection. It localises to the cilium. Acts as a GTPase-activating protein (GAP) involved in trafficking between the Golgi and the ciliary membrane. Acts as a GTPase-activating protein (GAP) for tubulin in concert with tubulin-specific chaperone C, but does not enhance tubulin heterodimerization. In the retina, required for maintenance of rod and cone photoreceptor cells. May have a role in normal retinal localization of the transducins GNB1 and GNAT1, and the rhodopsin kinase GRK1. The protein is Protein XRP2 of Danio rerio (Zebrafish).